The sequence spans 607 residues: Elongation factor 4 (607 aa).

The tr-type G domain maps to 11–193 (GKIRNFSIIA…QIVEKVPAPT (183 aa)). GTP contacts are provided by residues 23 to 28 (DHGKST) and 140 to 143 (NKID).

It belongs to the TRAFAC class translation factor GTPase superfamily. Classic translation factor GTPase family. LepA subfamily.

The protein localises to the cell membrane. The enzyme catalyses GTP + H2O = GDP + phosphate + H(+). Functionally, required for accurate and efficient protein synthesis under certain stress conditions. May act as a fidelity factor of the translation reaction, by catalyzing a one-codon backward translocation of tRNAs on improperly translocated ribosomes. Back-translocation proceeds from a post-translocation (POST) complex to a pre-translocation (PRE) complex, thus giving elongation factor G a second chance to translocate the tRNAs correctly. Binds to ribosomes in a GTP-dependent manner. In Streptococcus pneumoniae (strain JJA), this protein is Elongation factor 4.